A 56-amino-acid chain; its full sequence is Large ribosomal subunit protein bL33c (56 aa).

It belongs to the bacterial ribosomal protein bL33 family.

It localises to the plastid. It is found in the chloroplast. The chain is Large ribosomal subunit protein bL33c (rpl33) from Guillardia theta (Cryptophyte).